Reading from the N-terminus, the 147-residue chain is Hemoglobin subunit beta (147 aa).

Position 2 is an N-acetylvaline (V2). A Globin domain is found at 3-147 (HLSGSEKTAV…VSHALAHKYH (145 aa)). Residue T13 is modified to Phosphothreonine. S45 carries the phosphoserine modification. An N6-acetyllysine modification is found at K60. H64 contacts heme b. An N6-acetyllysine modification is found at K83. H93 is a binding site for heme b. C94 is subject to S-nitrosocysteine. K145 bears the N6-acetyllysine mark.

This sequence belongs to the globin family. In terms of assembly, heterotetramer of two alpha chains and two beta chains. In terms of tissue distribution, red blood cells.

Its function is as follows. Involved in oxygen transport from the lung to the various peripheral tissues. The polypeptide is Hemoglobin subunit beta (HBB) (Tachyglossus aculeatus aculeatus (Southeast Australian short-beaked echidna)).